The following is a 30-amino-acid chain: Mejucin (30 aa).

The protein localises to the secreted. In terms of biological role, bacteriocin that inhibits the growth of several Gram-positive bacteria, especially the food-borne pathogens L.monocytogenes, B.cereus strain ATCC 11778, B.cereus strain ATCC 21366, B.cereus strain ATCC 10876 and B.cereus strain ATCC 14579. Likely to act by disrupting the pathogen membrane resulting in leakage of intracellular constituents. Does not inhibit the growth of Gram-negative bacteria. The sequence is that of Mejucin from Bacillus subtilis.